The following is a 512-amino-acid chain: Probable cytosol aminopeptidase (512 aa).

Mn(2+) contacts are provided by lysine 284 and aspartate 289. Residue lysine 296 is part of the active site. The Mn(2+) site is built by aspartate 307, aspartate 366, and glutamate 368. Arginine 370 is an active-site residue.

It belongs to the peptidase M17 family. It depends on Mn(2+) as a cofactor.

It is found in the cytoplasm. It catalyses the reaction Release of an N-terminal amino acid, Xaa-|-Yaa-, in which Xaa is preferably Leu, but may be other amino acids including Pro although not Arg or Lys, and Yaa may be Pro. Amino acid amides and methyl esters are also readily hydrolyzed, but rates on arylamides are exceedingly low.. The catalysed reaction is Release of an N-terminal amino acid, preferentially leucine, but not glutamic or aspartic acids.. Functionally, presumably involved in the processing and regular turnover of intracellular proteins. Catalyzes the removal of unsubstituted N-terminal amino acids from various peptides. In Cupriavidus necator (strain ATCC 17699 / DSM 428 / KCTC 22496 / NCIMB 10442 / H16 / Stanier 337) (Ralstonia eutropha), this protein is Probable cytosol aminopeptidase.